The chain runs to 338 residues: S-adenosylmethionine:tRNA ribosyltransferase-isomerase (338 aa).

This sequence belongs to the QueA family. Monomer.

Its subcellular location is the cytoplasm. It carries out the reaction 7-aminomethyl-7-carbaguanosine(34) in tRNA + S-adenosyl-L-methionine = epoxyqueuosine(34) in tRNA + adenine + L-methionine + 2 H(+). The protein operates within tRNA modification; tRNA-queuosine biosynthesis. In terms of biological role, transfers and isomerizes the ribose moiety from AdoMet to the 7-aminomethyl group of 7-deazaguanine (preQ1-tRNA) to give epoxyqueuosine (oQ-tRNA). In Carboxydothermus hydrogenoformans (strain ATCC BAA-161 / DSM 6008 / Z-2901), this protein is S-adenosylmethionine:tRNA ribosyltransferase-isomerase.